Consider the following 184-residue polypeptide: MSGKQSEEFKRTEKMTRMEYLFPVRFAVGWMFLDGGLRKAVLKPAKLDPNSASFVGGKLVNFLPHAGPFKGLLLMTLENRSLDVTFLTVFSYIEIIAGLFIIIGLLTRLAALGALAMSVGFAPAYWLGSTCEDEWQIGALLTAGSVTLMLTAAGRVWGLDYFLYKKLGDRPIANVPILKWIKLW.

A run of 4 helical transmembrane segments spans residues 21–38, 86–106, 109–129, and 137–157; these read LFPV…GGLR, FLTV…IGLL, LAAL…WLGS, and IGAL…GRVW.

As to quaternary structure, heterodimer of a large and a small subunit in a 2:2 stoichiometry. TQO may associate with the terminal oxidase formed by doxBCE.

The protein localises to the cell membrane. It catalyses the reaction 6-decylubiquinone + 2 thiosulfate = 6-decylubiquinol + tetrathionate. With respect to regulation, inhibited by sulfite, metabisulfite and dithonite. Functionally, TQO plays a role in sulfur oxidation and is proposed to couple sulfur oxidation to dioxygen reduction; caldariellaquinone or sulfolobus quinone seem to serve to transfer electrons to the electron transport chain terminal oxidase formed by DoxBCE. The chain is Thiosulfate dehydrogenase [quinone] large subunit (doxD) from Acidianus ambivalens (Desulfurolobus ambivalens).